Here is a 305-residue protein sequence, read N- to C-terminus: tRNA pseudouridine synthase B (305 aa).

The active-site Nucleophile is the Asp38.

It belongs to the pseudouridine synthase TruB family. Type 1 subfamily.

It carries out the reaction uridine(55) in tRNA = pseudouridine(55) in tRNA. Functionally, responsible for synthesis of pseudouridine from uracil-55 in the psi GC loop of transfer RNAs. The sequence is that of tRNA pseudouridine synthase B from Latilactobacillus sakei subsp. sakei (strain 23K) (Lactobacillus sakei subsp. sakei).